A 138-amino-acid chain; its full sequence is Phosphoribosyl-AMP cyclohydrolase (138 aa).

Asp84 contacts Mg(2+). Cys85 serves as a coordination point for Zn(2+). Mg(2+)-binding residues include Asp86 and Asp88. Residues Cys102 and Cys109 each coordinate Zn(2+).

It belongs to the PRA-CH family. In terms of assembly, homodimer. Mg(2+) serves as cofactor. Zn(2+) is required as a cofactor.

It localises to the cytoplasm. The enzyme catalyses 1-(5-phospho-beta-D-ribosyl)-5'-AMP + H2O = 1-(5-phospho-beta-D-ribosyl)-5-[(5-phospho-beta-D-ribosylamino)methylideneamino]imidazole-4-carboxamide. The protein operates within amino-acid biosynthesis; L-histidine biosynthesis; L-histidine from 5-phospho-alpha-D-ribose 1-diphosphate: step 3/9. Functionally, catalyzes the hydrolysis of the adenine ring of phosphoribosyl-AMP. The sequence is that of Phosphoribosyl-AMP cyclohydrolase from Burkholderia pseudomallei (strain K96243).